The sequence spans 336 residues: S-adenosylmethionine:tRNA ribosyltransferase-isomerase (336 aa).

The protein belongs to the QueA family. In terms of assembly, monomer.

It is found in the cytoplasm. The enzyme catalyses 7-aminomethyl-7-carbaguanosine(34) in tRNA + S-adenosyl-L-methionine = epoxyqueuosine(34) in tRNA + adenine + L-methionine + 2 H(+). It functions in the pathway tRNA modification; tRNA-queuosine biosynthesis. In terms of biological role, transfers and isomerizes the ribose moiety from AdoMet to the 7-aminomethyl group of 7-deazaguanine (preQ1-tRNA) to give epoxyqueuosine (oQ-tRNA). This is S-adenosylmethionine:tRNA ribosyltransferase-isomerase from Sulfurihydrogenibium sp. (strain YO3AOP1).